Reading from the N-terminus, the 171-residue chain is Endoribonuclease YbeY (171 aa).

Zn(2+) contacts are provided by His-126, His-130, and His-136.

This sequence belongs to the endoribonuclease YbeY family. Requires Zn(2+) as cofactor.

It localises to the cytoplasm. In terms of biological role, single strand-specific metallo-endoribonuclease involved in late-stage 70S ribosome quality control and in maturation of the 3' terminus of the 16S rRNA. The sequence is that of Endoribonuclease YbeY from Rhizobium leguminosarum bv. trifolii (strain WSM2304).